The following is a 563-amino-acid chain: Arginine--tRNA ligase (563 aa).

Positions 119–129 match the 'HIGH' region motif; that stretch reads ANPTGPLHVGR.

Belongs to the class-I aminoacyl-tRNA synthetase family.

It is found in the cytoplasm. It carries out the reaction tRNA(Arg) + L-arginine + ATP = L-arginyl-tRNA(Arg) + AMP + diphosphate. This is Arginine--tRNA ligase from Methanocella arvoryzae (strain DSM 22066 / NBRC 105507 / MRE50).